A 189-amino-acid chain; its full sequence is Putative ankyrin repeat protein L38 (189 aa).

Residues 108–137 (YGKTPLITAIKSGNCIMVKKLIDYGADFNK) form an ANK repeat.

The protein is Putative ankyrin repeat protein L38 of Acanthamoeba polyphaga mimivirus (APMV).